The sequence spans 509 residues: Scavenger receptor class B member 1 (509 aa).

Residues 1 to 11 (MGNLSRARRVT) lie on the Cytoplasmic side of the membrane. A helical membrane pass occupies residues 12 to 32 (AALGFIGLLFAVLGIIMIVMV). At 33-440 (PSIIKQQVLK…YIQLVLMPKV (408 aa)) the chain is on the extracellular side. N-linked (GlcNAc...) asparagine glycans are attached at residues Asn102, Asn108, Asn173, Asn212, Asn227, Asn255, Asn310, Asn330, and Asn383. An intrachain disulfide couples Cys251 to Cys384. Residues 441–461 (LHYAQYVLLALGCVLLLIPII) traverse the membrane as a helical segment. Residues 462–509 (YQIRSQEKCYLFWISFKKGSKDKEAVQAYSEFLMTSAPKGTVLQEARL) are Cytoplasmic-facing.

This sequence belongs to the CD36 family. Post-translationally, N-glycosylated. In terms of processing, the six cysteines of the extracellular domain are all involved in intramolecular disulfide bonds.

The protein localises to the cell membrane. The protein resides in the membrane. It is found in the caveola. Its function is as follows. Receptor for different ligands such as phospholipids, cholesterol ester, lipoproteins, phosphatidylserine and apoptotic cells. Receptor for HDL, mediating selective uptake of cholesteryl ether and HDL-dependent cholesterol efflux. Also facilitates the flux of free and esterified cholesterol between the cell surface and apoB-containing lipoproteins and modified lipoproteins, although less efficiently than HDL. May be involved in the phagocytosis of apoptotic cells, via its phosphatidylserine binding activity. This is Scavenger receptor class B member 1 (SCARB1) from Bos taurus (Bovine).